The chain runs to 42 residues: MANTGVTGRIPLWLIGTVVGSLAIGLLAIFFYGSYVGLGSSL.

The chain crosses the membrane as a helical span at residues 10–30; sequence IPLWLIGTVVGSLAIGLLAIF.

It belongs to the PsbJ family. PSII is composed of 1 copy each of membrane proteins PsbA, PsbB, PsbC, PsbD, PsbE, PsbF, PsbH, PsbI, PsbJ, PsbK, PsbL, PsbM, PsbT, PsbX, PsbY, PsbZ, Psb30/Ycf12, at least 3 peripheral proteins of the oxygen-evolving complex and a large number of cofactors. It forms dimeric complexes.

Its subcellular location is the plastid. The protein localises to the chloroplast thylakoid membrane. Functionally, one of the components of the core complex of photosystem II (PSII). PSII is a light-driven water:plastoquinone oxidoreductase that uses light energy to abstract electrons from H(2)O, generating O(2) and a proton gradient subsequently used for ATP formation. It consists of a core antenna complex that captures photons, and an electron transfer chain that converts photonic excitation into a charge separation. The sequence is that of Photosystem II reaction center protein J from Stigeoclonium helveticum (Green alga).